The chain runs to 179 residues: ATP-dependent protease subunit HslV (179 aa).

The active site involves threonine 7. Positions 162, 165, and 168 each coordinate Na(+).

This sequence belongs to the peptidase T1B family. HslV subfamily. As to quaternary structure, a double ring-shaped homohexamer of HslV is capped on each side by a ring-shaped HslU homohexamer. The assembly of the HslU/HslV complex is dependent on binding of ATP.

It localises to the cytoplasm. It carries out the reaction ATP-dependent cleavage of peptide bonds with broad specificity.. Allosterically activated by HslU binding. Its function is as follows. Protease subunit of a proteasome-like degradation complex believed to be a general protein degrading machinery. This is ATP-dependent protease subunit HslV from Nitrosococcus oceani (strain ATCC 19707 / BCRC 17464 / JCM 30415 / NCIMB 11848 / C-107).